The chain runs to 473 residues: MASCVGSRTLSKDDVNYKMHFRMINEQQVEDITIDFFYRPHTITLLSFTIVSLMYFAFTRDDSVPEDNIWRGILSVIFFFLIISVLAFPNGPFTRPHPALWRMVFGLSVLYFLFLVFLLFLNFEQVKSLMYWLDPNLRYATREADVMEYAVNCHVITWERIISHFDIFAFGHFWGWAMKALLIRSYGLCWTISITWELTELFFMHLLPNFAECWWDQVILDILLCNGGGIWLGMVVCRFLEMRTYHWASFKDIHTTTGKIKRAVLQFTPASWTYVRWFDPKSSFQRVAGIYLFMIIWQLTELNTFFLKHIFVFQASHPLSWCRILFIGGITAPTVRQYYAYLTDTQCKRVGTQCWVFGVIGFLEAIVCIKFGQDLFSKTQILYVVLWLLCVAFTTFLCLYGMVWYAEHYGHREKTYSECEDGTYSPDISWPHGKGSKGSEDGPHKHPGNSESHSSRRRNRHSKSKVTNGVGKK.

Position 2 is an N-acetylalanine (Ala-2). The Cytoplasmic portion of the chain corresponds to 2 to 35; it reads ASCVGSRTLSKDDVNYKMHFRMINEQQVEDITID. Residues 36-56 form a helical membrane-spanning segment; that stretch reads FFYRPHTITLLSFTIVSLMYF. Topologically, residues 57-72 are lumenal; it reads AFTRDDSVPEDNIWRG. The chain crosses the membrane as a helical span at residues 73–93; it reads ILSVIFFFLIISVLAFPNGPF. At 94–102 the chain is on the cytoplasmic side; sequence TRPHPALWR. A helical transmembrane segment spans residues 103–123; sequence MVFGLSVLYFLFLVFLLFLNF. At 124-186 the chain is on the lumenal side; the sequence is EQVKSLMYWL…AMKALLIRSY (63 aa). Residues 187-207 traverse the membrane as a helical segment; sequence GLCWTISITWELTELFFMHLL. Residues 208-216 are Cytoplasmic-facing; sequence PNFAECWWD. Residues 217 to 237 traverse the membrane as a helical segment; sequence QVILDILLCNGGGIWLGMVVC. Topologically, residues 238 to 286 are lumenal; the sequence is RFLEMRTYHWASFKDIHTTTGKIKRAVLQFTPASWTYVRWFDPKSSFQR. A helical membrane pass occupies residues 287 to 307; the sequence is VAGIYLFMIIWQLTELNTFFL. At 308-319 the chain is on the cytoplasmic side; the sequence is KHIFVFQASHPL. The chain crosses the membrane as a helical span at residues 320-342; sequence SWCRILFIGGITAPTVRQYYAYL. The Lumenal portion of the chain corresponds to 343–355; that stretch reads TDTQCKRVGTQCW. The helical transmembrane segment at 356 to 376 threads the bilayer; the sequence is VFGVIGFLEAIVCIKFGQDLF. Over 377 to 383 the chain is Cytoplasmic; it reads SKTQILY. A helical membrane pass occupies residues 384–404; sequence VVLWLLCVAFTTFLCLYGMVW. The Lumenal portion of the chain corresponds to 405–473; that stretch reads YAEHYGHREK…SKVTNGVGKK (69 aa). A phosphoserine mark is found at Ser-417, Ser-425, and Ser-454. A disordered region spans residues 427–473; the sequence is DISWPHGKGSKGSEDGPHKHPGNSESHSSRRRNRHSKSKVTNGVGKK. Residues 455 to 464 show a composition bias toward basic residues; sequence SRRRNRHSKS.

The protein belongs to the phosphatidyl serine synthase family.

It is found in the endoplasmic reticulum membrane. It carries out the reaction a 1,2-diacyl-sn-glycero-3-phosphoethanolamine + L-serine = a 1,2-diacyl-sn-glycero-3-phospho-L-serine + ethanolamine. The catalysed reaction is a 1,2-diacyl-sn-glycero-3-phosphocholine + L-serine = a 1,2-diacyl-sn-glycero-3-phospho-L-serine + choline. The protein operates within phospholipid metabolism; phosphatidylserine biosynthesis. Catalyzes a base-exchange reaction in which the polar head group of phosphatidylethanolamine (PE) or phosphatidylcholine (PC) is replaced by L-serine. Catalyzes mainly the conversion of phosphatidylcholine but also converts, in vitro and to a lesser extent, phosphatidylethanolamine. The polypeptide is Phosphatidylserine synthase 1 (PTDSS1) (Bos taurus (Bovine)).